Here is a 142-residue protein sequence, read N- to C-terminus: Large ribosomal subunit protein uL11 (142 aa).

Positions 84 to 103 (AGVKSGSGRPNSDKVGTVTD) are disordered.

It belongs to the universal ribosomal protein uL11 family. As to quaternary structure, part of the ribosomal stalk of the 50S ribosomal subunit. Interacts with L10 and the large rRNA to form the base of the stalk. L10 forms an elongated spine to which L12 dimers bind in a sequential fashion forming a multimeric L10(L12)X complex. One or more lysine residues are methylated.

In terms of biological role, forms part of the ribosomal stalk which helps the ribosome interact with GTP-bound translation factors. This Aliivibrio salmonicida (strain LFI1238) (Vibrio salmonicida (strain LFI1238)) protein is Large ribosomal subunit protein uL11.